A 200-amino-acid polypeptide reads, in one-letter code: Guanylate kinase (200 aa).

One can recognise a Guanylate kinase-like domain in the interval 4–183 (GAVLIISGPS…AKEAMVAIAR (180 aa)). 11–18 (GPSGCGKS) is a binding site for ATP.

The protein belongs to the guanylate kinase family.

The protein localises to the cytoplasm. It catalyses the reaction GMP + ATP = GDP + ADP. Functionally, essential for recycling GMP and indirectly, cGMP. This chain is Guanylate kinase, found in Helicobacter hepaticus (strain ATCC 51449 / 3B1).